The chain runs to 76 residues: Conotoxin Im6.9 (76 aa).

An N-terminal signal peptide occupies residues 1–19 (MEKLTILLLVTAVLMSTQA). A propeptide spanning residues 20-45 (LMQSGIEKRQRAKIKFFSKRKTTAER) is cleaved from the precursor. 3 disulfide bridges follow: cysteine 51-cysteine 65, cysteine 58-cysteine 69, and cysteine 64-cysteine 73.

This sequence belongs to the conotoxin O2 superfamily. As to expression, expressed by the venom duct.

Its subcellular location is the secreted. Its function is as follows. Probable neurotoxin. This is Conotoxin Im6.9 from Conus imperialis (Imperial cone).